Here is a 338-residue protein sequence, read N- to C-terminus: Probable tRNA pseudouridine synthase B (338 aa).

Asp78 (nucleophile) is an active-site residue. Residues 245-320 enclose the PUA domain; sequence LPKIILRDSA…IAASPIRVLM (76 aa).

It belongs to the pseudouridine synthase TruB family. Type 2 subfamily.

It catalyses the reaction uridine(55) in tRNA = pseudouridine(55) in tRNA. In terms of biological role, could be responsible for synthesis of pseudouridine from uracil-55 in the psi GC loop of transfer RNAs. The chain is Probable tRNA pseudouridine synthase B from Methanosarcina acetivorans (strain ATCC 35395 / DSM 2834 / JCM 12185 / C2A).